The primary structure comprises 328 residues: dTDP-3,4-didehydro-2,6-dideoxy-alpha-D-glucose 3-reductase (328 aa).

Residue R20 participates in substrate binding. NADP(+) is bound by residues 38–39 (SR), L75, and H80. K98 functions as the Proton donor in the catalytic mechanism. NADP(+)-binding residues include R166 and D178. Residues Y236 and T256 each coordinate substrate.

Belongs to the Gfo/Idh/MocA family.

The enzyme catalyses dTDP-4-dehydro-2,6-dideoxy-alpha-D-glucose + NADP(+) = dTDP-3,4-didehydro-2,6-dideoxy-alpha-D-glucose + NADPH + H(+). The protein operates within antibiotic biosynthesis. Its function is as follows. Involved in the biosynthesis of one of the two 2,6-deoxysugars, dTDP-L-oleandrose, attached to the macrolactone ring oleandolide to produce the aglycone antibiotic oleandomycin. Catalyzes the reduction of the C-3 keto moiety of dTDP-3,4-diketo-2,6-dideoxy-alpha-D-glucose to yield dTDP-4-keto-2,6-dideoxy-alpha-D-glucose. NADPH is the better reductant, however NADH can also be used. This is dTDP-3,4-didehydro-2,6-dideoxy-alpha-D-glucose 3-reductase from Streptomyces antibioticus.